Consider the following 478-residue polypeptide: Histidine--tRNA ligase (478 aa).

It belongs to the class-II aminoacyl-tRNA synthetase family. As to quaternary structure, homodimer.

The protein localises to the cytoplasm. The catalysed reaction is tRNA(His) + L-histidine + ATP = L-histidyl-tRNA(His) + AMP + diphosphate + H(+). This Xanthomonas axonopodis pv. citri (strain 306) protein is Histidine--tRNA ligase (hisS).